The primary structure comprises 171 residues: Large ribosomal subunit protein uL10 (171 aa).

Belongs to the universal ribosomal protein uL10 family. As to quaternary structure, part of the ribosomal stalk of the 50S ribosomal subunit. The N-terminus interacts with L11 and the large rRNA to form the base of the stalk. The C-terminus forms an elongated spine to which L12 dimers bind in a sequential fashion forming a multimeric L10(L12)X complex.

Forms part of the ribosomal stalk, playing a central role in the interaction of the ribosome with GTP-bound translation factors. This chain is Large ribosomal subunit protein uL10, found in Lactococcus lactis subsp. cremoris (strain SK11).